The sequence spans 72 residues: Small proline-rich protein 2D (72 aa).

Low complexity predominate over residues 1–11; sequence MSYQQQQCKQP. Positions 1–20 are disordered; that stretch reads MSYQQQQCKQPCQPPPVCPT. A run of 3 repeats spans residues 21 to 29, 30 to 38, and 39 to 47. A 3 X 9 AA tandem repeats of P-K-C-P-[EQ]-P-C-P-[PS] region spans residues 21 to 47; it reads PKCPEPCPPPKCPEPCPSPKCPQPCPP. Composition is skewed to pro residues over residues 33 to 47 and 56 to 72; these read PEPC…PCPP and PVTP…PKSK. The interval 33 to 72 is disordered; sequence PEPCPSPKCPQPCPPQQCQQKYPPVTPSPPCQPKCPPKSK.

This sequence belongs to the cornifin (SPRR) family.

The protein resides in the cytoplasm. Cross-linked envelope protein of keratinocytes. It is a keratinocyte protein that first appears in the cell cytosol, but ultimately becomes cross-linked to membrane proteins by transglutaminase. All that results in the formation of an insoluble envelope beneath the plasma membrane. The chain is Small proline-rich protein 2D (SPRR2D) from Homo sapiens (Human).